We begin with the raw amino-acid sequence, 308 residues long: Putative S-adenosyl-L-methionine-dependent methyltransferase Mb3816c (308 aa).

S-adenosyl-L-methionine contacts are provided by residues Asp131 and 160–161 (DL).

Belongs to the UPF0677 family.

Exhibits S-adenosyl-L-methionine-dependent methyltransferase activity. The chain is Putative S-adenosyl-L-methionine-dependent methyltransferase Mb3816c from Mycobacterium bovis (strain ATCC BAA-935 / AF2122/97).